The sequence spans 29 residues: Galanin (29 aa).

At Ala-29 the chain carries Alanine amide.

Belongs to the galanin family.

It is found in the secreted. Its function is as follows. Contracts smooth muscle of the gastrointestinal and genitourinary tract, regulates growth hormone release, modulates insulin release, and may be involved in the control of adrenal secretion. In Pelophylax ridibundus (Marsh frog), this protein is Galanin (gal).